Here is a 579-residue protein sequence, read N- to C-terminus: Insulin-like growth factor 2 mRNA-binding protein 3 (579 aa).

RRM domains lie at 2-75 (NKLY…HSVP) and 81-156 (RKLQ…YIPD). The tract at residues 158–192 (TAAQQNPSPQLRGRRGPGQRGSSRQASPGSVSKQK) is disordered. S165 is modified (phosphoserine). Phosphoserine; by MTOR is present on S184. 3 KH domains span residues 195-260 (DLPL…CKSI), 276-343 (EIPL…EEEI), and 405-470 (TETV…QGRI). Glycyl lysine isopeptide (Lys-Gly) (interchain with G-Cter in SUMO2) cross-links involve residues K450 and K475. The region spanning 487-553 (KLEAHIRVPS…YACQVAQRKI (67 aa)) is the KH 4 domain. A Phosphothreonine modification is found at T528.

This sequence belongs to the RRM IMP/VICKZ family. In terms of assembly, can form homooligomers and heterooligomers with IGF2BP1 and IGF2BP3 in an RNA-dependent manner. Interacts with IGF2BP1. Interacts with ELAVL1, DHX9, HNRNPU, MATR3 and PABPC1. As to expression, expressed in oocytes, spermatogonia and spermatocytes (at protein level).

It is found in the nucleus. The protein localises to the cytoplasm. It localises to the P-body. The protein resides in the stress granule. Functionally, RNA-binding factor that may recruit target transcripts to cytoplasmic protein-RNA complexes (mRNPs). This transcript 'caging' into mRNPs allows mRNA transport and transient storage. It also modulates the rate and location at which target transcripts encounter the translational apparatus and shields them from endonuclease attacks or microRNA-mediated degradation. Preferentially binds to N6-methyladenosine (m6A)-containing mRNAs and increases their stability. Binds to the 3'-UTR of CD44 mRNA and stabilizes it, hence promotes cell adhesion and invadopodia formation. Binds to beta-actin/ACTB and MYC transcripts. Increases MYC mRNA stability by binding to the coding region instability determinant (CRD) and binding is enhanced by m6A-modification of the CRD. Binds to the 5'-UTR of the insulin-like growth factor 2 (IGF2) mRNAs. This is Insulin-like growth factor 2 mRNA-binding protein 3 (Igf2bp3) from Mus musculus (Mouse).